Reading from the N-terminus, the 431-residue chain is IMP-specific 5'-nucleotidase 1 (431 aa).

Lys117 serves as a coordination point for ATP. Asp157 serves as the catalytic Nucleophile. 6 residues coordinate IMP: Asp157, Asp159, Asp165, Thr193, Asp349, and Lys357. Residues Asp157 and Asp159 each coordinate Mg(2+). Asp159 (proton donor) is an active-site residue. Asp388 contributes to the Mg(2+) binding site.

Belongs to the ISN1 family. Homotetramer. Mg(2+) is required as a cofactor.

The enzyme catalyses IMP + H2O = inosine + phosphate. Its activity is regulated as follows. Allosterically activated by ATP. ATP binding is a prerequisite to magnesium and substrate binding. ATP binds to 2 of the subunits in the homotetramer inducing a closure of these 2 subunits and the release of the C-terminal loop, thereby activating the enzyme. In terms of biological role, IMP-specific 5'-nucleotidase involved in IMP (inositol monophosphate) degradation. The polypeptide is IMP-specific 5'-nucleotidase 1 (isn-1) (Neurospora crassa (strain ATCC 24698 / 74-OR23-1A / CBS 708.71 / DSM 1257 / FGSC 987)).